A 130-amino-acid polypeptide reads, in one-letter code: uncharacterized protein (130 aa).

Asparagine 102 is a glycosylation site (N-linked (GlcNAc...) asparagine). Residues 110-130 (DPLAFYLMFLIIITILLIMIL) traverse the membrane as a helical segment.

The protein resides in the membrane. This is an uncharacterized protein from Dictyostelium discoideum (Social amoeba).